A 39-amino-acid polypeptide reads, in one-letter code: Cytochrome b559 subunit beta (39 aa).

A helical transmembrane segment spans residues 14–30 (WLAIHGLAVPTVFFLGS). H18 is a heme binding site.

As to quaternary structure, heterodimer of an alpha subunit and a beta subunit. PSII is composed of 1 copy each of membrane proteins PsbA, PsbB, PsbC, PsbD, PsbE, PsbF, PsbH, PsbI, PsbJ, PsbK, PsbL, PsbM, PsbT, PsbX, PsbY, PsbZ, Psb30/Ycf12, at least 3 peripheral proteins of the oxygen-evolving complex and a large number of cofactors. It forms dimeric complexes. The cofactor is heme b. In terms of processing, the N-terminus is blocked.

It localises to the plastid. It is found in the chloroplast thylakoid membrane. Functionally, this b-type cytochrome is tightly associated with the reaction center of photosystem II (PSII). PSII is a light-driven water:plastoquinone oxidoreductase that uses light energy to abstract electrons from H(2)O, generating O(2) and a proton gradient subsequently used for ATP formation. It consists of a core antenna complex that captures photons, and an electron transfer chain that converts photonic excitation into a charge separation. The protein is Cytochrome b559 subunit beta of Spinacia oleracea (Spinach).